Here is a 1488-residue protein sequence, read N- to C-terminus: MDVLELLRASVNGCYNTLFSDAWSQYVSKQIATTTYWYGALLAIGALFIAWFLYFKRLASLRLRDESARTLSALTAASGGDHRGLRFRKRDKMLFYGRRMLRKMKNVSGQMYSSGKGYKRRAVMRFARRILQLQRENRPLEMKTVEPPAEYLEETIDGSDRVPPDALYMLQSIRIFGHFEKPIFLKLCKHTQLLQLMAGDYLFKITDPDDSVYIVQSGMINVYICNADGSTLSLKTVRKGESVTSLLSFIDVLSGNSSYYKTVTAKAMEKSVVIRLPMQAFEEVFNENPDVMIRVIQVIMIRLQRVLFTALRNYLGLNAELVQNHMRIKGSNPVPVTVPGPVLSQASQASRAMASRPATSPVTRMSREEHTLSDPDPNPNASAMLFAEVHGDAPYIDLYHHQQQQSSGVSVGGTHRSSGACTPTGSGGESPDGTGNATITNIDQRLVQSSAVDSLRRELGLSEEDTSIIEPFVEVRELEPNVTLITEGNAEDVCIWFVMTGTLAVYQSNADATRAAKQDSKNDMLIHFVHPGEIVGGLAMLTGEASAYTIRARSNSRIAYIRRAAIYQIMRQRPRIVLDLGNGVVRRLSPLVRQCDYALDWIFLESGRAVYRQDESSDSTYIVLSGRMRSVITHPGGKKEIVGEYGKGDLVGIVEMITETSRTTTVLAVRDSELAKLPEGLFNAIKLRYPIVVTRLISFLSHRFLGSMQTRGANASSAPVEANPVTHKYSTVALVPITDDVPITPFTYELYHSLCAIGPVLRLTSEVVRKQLGNNIFEAANEYRLTSWLAQQEDRNIITLYQCDSALSPWTQRCMRQADVVLIVGLGERSHMVGKFEREIDKLAMRTQKELVLLYPETTNARPANTLSWLNARPWVTKHHHVLCVKRIFTRKSQYRINDLYSRVLLSEPNMHSDFSRLARWLTGNSIGLVLGGGGARGAAHIGMLKAIQEAGIPIDMVGGVSIGALMGALWCSERNITTVTQKAREWSKKMTKWFLQLLDLTYPITSMFSGREFNKTIHDTFGDVSIEDLWIPYFTLTTDITASCHRIHTNGSLWRYVRSSMSLSGYMPPLCDPQDGHLLLDGGYVNNLPGHLWRYCRASMSIAGVFPPFCDYRDGHLLLDGCYTNNVPADVMHNLGAAHIIAIDVGSQDDTDLTNYGDDLSGWWLLYKKWNPFTSPVKVPDLPDIQSRLAYVSCVRQLEEVKNSDYCEYIRPPIDKYKTLAFGSFDEIRDVGYVFGKNYFDNMAKAGRLGRFNQWFNKEPPKRGNHASLNEYTFIDLAQIVCKLPETYALNAVDIFSEDEDFDGYISEPTTLNMDRHRIQVPRAGNSLSFSETELDSDVEIDLELERKVDKSTQSTPPTPNKKHPSTPTSSQGNLMHLPLSMKAKDKMQILDKLEREHKRRQKSKHKRDRSMQRDSKATLHPAPMAEATTQTPSSDVDIDAKLDQLRKLQQELEQGNESEQEQEQEQEQEQGHIQEPENVTEADTKN.

Residues 1-34 (MDVLELLRASVNGCYNTLFSDAWSQYVSKQIATT) lie on the Lumenal side of the membrane. The chain crosses the membrane as a helical span at residues 35-55 (TYWYGALLAIGALFIAWFLYF). The Cytoplasmic portion of the chain corresponds to 56-1488 (KRLASLRLRD…ENVTEADTKN (1433 aa)). Residue 175 to 302 (IFGHFEKPIF…IRVIQVIMIR (128 aa)) coordinates a nucleoside 3',5'-cyclic phosphate. Disordered stretches follow at residues 339–379 (PGPV…DPNP) and 402–440 (QQQQ…ATIT). Low complexity-rich tracts occupy residues 344–356 (SQAS…MASR) and 402–413 (QQQQSSGVSVGG). The segment covering 415-424 (HRSSGACTPT) has biased composition (polar residues). A nucleoside 3',5'-cyclic phosphate contacts are provided by residues 458–587 (ELGL…VVRR) and 576–703 (IVLD…LSHR). The PNPLA domain occupies 929–1095 (LVLGGGGARG…VNNLPGHLWR (167 aa)). The GXGXXG signature appears at 933 to 938 (GGGARG). Residues 960–964 (GVSIG) carry the GXSXG motif. The active-site Nucleophile is S962. D1082 acts as the Proton acceptor in catalysis. The DGA/G signature appears at 1082–1084 (DGG). S1176 carries the phosphoserine modification. Disordered regions lie at residues 1348 to 1376 (RKVD…QGNL) and 1398 to 1488 (EHKR…DTKN). Residues 1399–1410 (HKRRQKSKHKRD) are compositionally biased toward basic residues. The span at 1440–1452 (IDAKLDQLRKLQQ) shows a compositional bias: basic and acidic residues. Acidic residues predominate over residues 1456 to 1470 (QGNESEQEQEQEQEQ).

This sequence belongs to the NTE family. In terms of assembly, interacts with Pka-C3; interaction inhibits the catalytic function of Pka-C3 and the esterase activity of sws.

The protein localises to the endoplasmic reticulum membrane. The catalysed reaction is a 1-acyl-sn-glycero-3-phosphocholine + H2O = sn-glycerol 3-phosphocholine + a fatty acid + H(+). Phospholipase B that deacylates intracellular phosphatidylcholine (PtdCho), generating glycerophosphocholine (GroPtdCho). This deacylation occurs at both sn-2 and sn-1 positions of PtdCho. Its specific chemical modification by certain organophosphorus (OP) compounds leads to distal axonopathy. Plays a role in the signaling mechanism between neurons and glia that regulates glia wrapping during development of the adult brain. Essential for membrane lipid homeostasis and cell survival in both neurons and glia of the adult brain. This is Neuropathy target esterase sws from Drosophila mojavensis (Fruit fly).